The following is a 221-amino-acid chain: MKPLIVLNLKTYLEGTGEGAVRIARACKEVGEASGIEIAIAPQFCDIYRVASQVDVPVYSQHLDGVGAGSFTGHAFAKCIKDAGAVGTLINHSECRLKLADIEASVTAAKGEGLRTIICTNNIATTAAAAALGPDYVAVEPPELIGSGIPVSKADPEVVTGSVAAVERIDPAVKVLCGAGISKGEDLKAAIELGSVGVLLASGIVKAKDPKAALEDLVSLI.

8–10 (NLK) is a binding site for substrate. H92 (electrophile) is an active-site residue. The active-site Proton acceptor is E140. Substrate is bound by residues I145, G180, and 201–202 (AS).

The protein belongs to the triosephosphate isomerase family. Homotetramer; dimer of dimers.

Its subcellular location is the cytoplasm. The catalysed reaction is D-glyceraldehyde 3-phosphate = dihydroxyacetone phosphate. The protein operates within carbohydrate biosynthesis; gluconeogenesis. It functions in the pathway carbohydrate degradation; glycolysis; D-glyceraldehyde 3-phosphate from glycerone phosphate: step 1/1. Involved in the gluconeogenesis. Catalyzes stereospecifically the conversion of dihydroxyacetone phosphate (DHAP) to D-glyceraldehyde-3-phosphate (G3P). This is Triosephosphate isomerase from Methanococcoides burtonii (strain DSM 6242 / NBRC 107633 / OCM 468 / ACE-M).